The sequence spans 359 residues: RuBisCO accumulation factor 1 (359 aa).

The N-terminal alpha-helix stretch occupies residues 12–195; the sequence is LSPEETDALF…RQKIEQLLSD (184 aa). The C-terminal beta-sheet stretch occupies residues 219-345; sequence PLLIPVAGSL…VLLVMRPKKI (127 aa).

It belongs to the RAF family. Homodimer. Forms an RbcL(8)-Raf1(8) complex. Forms complexes of many stoichiometries with RbcL with and without RbcS. RbcX and Raf1 can bind simultaneously to RbcL.

It is found in the cytoplasm. A major RuBisCO chaperone. Acts after GroEL-GroES chaperonin to fold and/or assemble the large subunit of RuBisCO (ccbL, rbcL). Cooperates with RbcX in RbcL folding, plays the major role in assembly of dimers into RbcL(8)-Raf1(8) intermediate complexes. RbcS replaces Raf1, leading to holoenzyme formation. Its function is as follows. Raf1 and RbcX are probably functionally redundant; it has been suggested they may cooperate. The protein is RuBisCO accumulation factor 1 of Picosynechococcus sp. (strain ATCC 27264 / PCC 7002 / PR-6) (Agmenellum quadruplicatum).